The following is a 251-amino-acid chain: V-set and transmembrane domain-containing protein 2B (251 aa).

Residues 1–25 (MEKQGLFSALCYLMLNTPLLFSVNA) form the signal peptide. Residues 26 to 142 (TFTEVPKDVT…DETQEHKAQA (117 aa)) enclose the Ig-like V-type domain. Residues 26–226 (TFTEVPKDVT…RQQHGSGTGP (201 aa)) are Extracellular-facing. Cysteines 46 and 125 form a disulfide. The tract at residues 157–213 (AAEAVSHIQSSGPRRNNPSSRATPEPGNKRAVPPAENLAPSLSTAASSSASPAPGKA) is disordered. 2 stretches are compositionally biased toward low complexity: residues 166 to 177 (SSGPRRNNPSSR) and 195 to 213 (APSL…PGKA). Residues 227 to 247 (IFANDPALYMFLLIFHQLVYL) form a helical membrane-spanning segment. The Cytoplasmic segment spans residues 248-251 (LLNH).

The protein resides in the membrane. In Xenopus tropicalis (Western clawed frog), this protein is V-set and transmembrane domain-containing protein 2B (vstm2b).